We begin with the raw amino-acid sequence, 80 residues long: LSM complex subunit lsm5 (80 aa).

Residues L6 to P79 form the Sm domain.

The protein belongs to the snRNP Sm proteins family. Component of the heptameric LSM1-LSM7 complex that forms a seven-membered ring structure with a donut shape. The LSm subunits are arranged in the order lsm1, lsm2, lsm3, lsm6, lsm5, lsm7 and lsm4. Component of the heptameric LSM2-LSM8 complex that forms a seven-membered ring structure with a donut shape. The LSm subunits are arranged in the order lsm8, lsm2, lsm3, lsm6, lsm5, lsm7 and lsm4.

It localises to the nucleus. Its function is as follows. Component of LSm protein complexes, which are involved in RNA processing and may function in a chaperone-like manner. Component of the cytoplasmic LSM1-LSM7 complex which is involved in mRNA degradation by activating the decapping step. The LSM1-LSM7 complex loads onto the 3'-end of single stranded RNA. Component of the nuclear LSM2-LSM8 complex, which is involved in spliceosome assembly. The LSM2-LSM8 complex plays a role in the biogenesis of the spliceosomal U4/U6-U5 tri-snRNP complex by accelerating prp24-mediated annealing of U4/U6 di-snRNA. The LSM2-LSM8 complex binds U6 snRNA terminating with a cyclic 2',3' phosphate group; RNA with an unmodified 3' hydroxyl or non-cyclic 3' phosphate is bound less tightly. This Schizosaccharomyces pombe (strain 972 / ATCC 24843) (Fission yeast) protein is LSM complex subunit lsm5 (lsm5).